Consider the following 56-residue polypeptide: Prokaryotic ubiquitin-like protein UBact (56 aa).

The interval 1 to 56 is disordered; the sequence is MPDQAQKTRPVGPGPSGGGEGPGSPKVEKPNTEELLKRMRKVDPDQAKRYRQRTGQ. Residues 26 to 48 show a composition bias toward basic and acidic residues; sequence KVEKPNTEELLKRMRKVDPDQAK. Glutamine 56 carries the deamidated glutamine modification. Glutamine 56 participates in a covalent cross-link: Isoglutamyl lysine isopeptide (Gln-Lys) (interchain with K-? in acceptor proteins).

This sequence belongs to the ubiquitin-like protein UBact family. May be modified by deamidation of its C-terminal glutamine to glutamate by the adjacently encoded deamidase. This could be a prerequisite to the subsequent conjugation, as shown in the other prokaryotic ubiquitin-like protein Pup.

May function as a protein modifier covalently attached to lysine residues of substrate proteins. This may serve to target the modified proteins for degradation by proteasomes. The polypeptide is Prokaryotic ubiquitin-like protein UBact (Pedosphaera parvula (strain Ellin514)).